Consider the following 112-residue polypeptide: C-X-C motif chemokine 6 (112 aa).

A signal peptide spans 1 to 36 (MRLLSSRAARVSGPSGSLCALLALLLLTPPGPLASA). 2 cysteine pairs are disulfide-bonded: Cys-48–Cys-74 and Cys-50–Cys-90.

This sequence belongs to the intercrine alpha (chemokine CxC) family.

The protein resides in the secreted. In terms of biological role, chemotactic for neutrophil granulocytes. Signals through binding and activation of its receptors (CXCR1 and CXCR2). In addition to its chemotactic and angiogenic properties, it has strong antibacterial activity against Gram-positive and Gram-negative bacteria (90-fold-higher when compared to CXCL5 and CXCL7). This Bos taurus (Bovine) protein is C-X-C motif chemokine 6 (CXCL6).